The following is an 854-amino-acid chain: Alkaline phosphatase-like protein PglZ (854 aa).

Belongs to the alkaline phosphatase superfamily.

Functionally, BREX systems (bacteriophage exclusion) provide immunity against bacteriophage. A core protein of a type 1 BREX system. This system allows phage adsorption but prevents phage DNA replication, without degradation of the phage DNA. Methylation of bacterial DNA by PglX probably guides self/non-self discrimination. When the brxA-brxB-brxC-pglX and pglZ-brxL operons are transformed into a susceptible B.subtilis strain (BEST7003) they confer resistance to bacteriophages SPbeta, SP16, Zeta, phi3T and SP02 and partial protection to phages SP01 and SP82G (these include lytic and temperate phage). They do not protect against phages phi105, rho10 or rho14. Additionally confers a very slight reduction in efficiency of plasmid transformation. The protein is Alkaline phosphatase-like protein PglZ of Bacillus cereus (strain H3081.97).